The following is a 348-amino-acid chain: Protein-glutamate methylesterase/protein-glutamine glutaminase 2 (348 aa).

The Response regulatory domain maps to 5–122; sequence KVLIIDDSAL…DLGLSQYRDE (118 aa). Asp-56 is modified (4-aspartylphosphate). The region spanning 157–348 is the CheB-type methylesterase domain; it reads SLKTGFLCAI…AANIIKHALK (192 aa). Residues Ser-169, His-195, and Asp-291 contribute to the active site.

It belongs to the CheB family. Phosphorylated by CheA. Phosphorylation of the N-terminal regulatory domain activates the methylesterase activity.

Its subcellular location is the cytoplasm. It catalyses the reaction [protein]-L-glutamate 5-O-methyl ester + H2O = L-glutamyl-[protein] + methanol + H(+). The catalysed reaction is L-glutaminyl-[protein] + H2O = L-glutamyl-[protein] + NH4(+). Functionally, involved in chemotaxis. Part of a chemotaxis signal transduction system that modulates chemotaxis in response to various stimuli. Catalyzes the demethylation of specific methylglutamate residues introduced into the chemoreceptors (methyl-accepting chemotaxis proteins or MCP) by CheR. Also mediates the irreversible deamidation of specific glutamine residues to glutamic acid. The sequence is that of Protein-glutamate methylesterase/protein-glutamine glutaminase 2 from Saccharophagus degradans (strain 2-40 / ATCC 43961 / DSM 17024).